A 406-amino-acid chain; its full sequence is Protein phosphatase 2C (406 aa).

The PPM-type phosphatase domain maps to Arg-23–Phe-274. 4 residues coordinate Mn(2+): Asp-55, Gly-56, Asp-221, and Asp-265.

This sequence belongs to the PP2C family. As to quaternary structure, monomer. Requires Mg(2+) as cofactor. It depends on Mn(2+) as a cofactor.

The catalysed reaction is O-phospho-L-seryl-[protein] + H2O = L-seryl-[protein] + phosphate. It catalyses the reaction O-phospho-L-threonyl-[protein] + H2O = L-threonyl-[protein] + phosphate. Its function is as follows. Enzyme with a broad specificity. The sequence is that of Protein phosphatase 2C from Leishmania chagasi.